The following is a 130-amino-acid chain: Large ribosomal subunit protein bL12 (130 aa).

Residues 94–114 (MTEGLPKTVKEKTSKSDAEDT) form a disordered region.

It belongs to the bacterial ribosomal protein bL12 family. Homodimer. Part of the ribosomal stalk of the 50S ribosomal subunit. Forms a multimeric L10(L12)X complex, where L10 forms an elongated spine to which 2 to 4 L12 dimers bind in a sequential fashion. Binds GTP-bound translation factors.

In terms of biological role, forms part of the ribosomal stalk which helps the ribosome interact with GTP-bound translation factors. Is thus essential for accurate translation. In Chlamydia caviae (strain ATCC VR-813 / DSM 19441 / 03DC25 / GPIC) (Chlamydophila caviae), this protein is Large ribosomal subunit protein bL12.